The primary structure comprises 209 residues: Uracil phosphoribosyltransferase (209 aa).

Residues Arg79, Arg104, and 131 to 139 each bind 5-phospho-alpha-D-ribose 1-diphosphate; that span reads DPMLATGAS. Uracil is bound by residues Ile194 and 199–201; that span reads GDA. A 5-phospho-alpha-D-ribose 1-diphosphate-binding site is contributed by Asp200.

This sequence belongs to the UPRTase family. Requires Mg(2+) as cofactor.

It catalyses the reaction UMP + diphosphate = 5-phospho-alpha-D-ribose 1-diphosphate + uracil. It functions in the pathway pyrimidine metabolism; UMP biosynthesis via salvage pathway; UMP from uracil: step 1/1. Allosterically activated by GTP. In terms of biological role, catalyzes the conversion of uracil and 5-phospho-alpha-D-ribose 1-diphosphate (PRPP) to UMP and diphosphate. The chain is Uracil phosphoribosyltransferase from Staphylococcus haemolyticus (strain JCSC1435).